We begin with the raw amino-acid sequence, 291 residues long: 2-C-methyl-D-erythritol 4-phosphate cytidylyltransferase (291 aa).

The tract at residues 1-23 (MTERDFDTPVETPTVQPAPAQGA) is disordered.

The protein belongs to the IspD/TarI cytidylyltransferase family. IspD subfamily.

The catalysed reaction is 2-C-methyl-D-erythritol 4-phosphate + CTP + H(+) = 4-CDP-2-C-methyl-D-erythritol + diphosphate. The protein operates within isoprenoid biosynthesis; isopentenyl diphosphate biosynthesis via DXP pathway; isopentenyl diphosphate from 1-deoxy-D-xylulose 5-phosphate: step 2/6. In terms of biological role, catalyzes the formation of 4-diphosphocytidyl-2-C-methyl-D-erythritol from CTP and 2-C-methyl-D-erythritol 4-phosphate (MEP). This Bifidobacterium longum (strain DJO10A) protein is 2-C-methyl-D-erythritol 4-phosphate cytidylyltransferase.